The sequence spans 174 residues: Ribosome maturation factor RimM (174 aa).

Positions 98-172 (AGEYYYHQIV…VVTVELMEGL (75 aa)) constitute a PRC barrel domain.

This sequence belongs to the RimM family. In terms of assembly, binds ribosomal protein uS19.

Its subcellular location is the cytoplasm. In terms of biological role, an accessory protein needed during the final step in the assembly of 30S ribosomal subunit, possibly for assembly of the head region. Essential for efficient processing of 16S rRNA. May be needed both before and after RbfA during the maturation of 16S rRNA. It has affinity for free ribosomal 30S subunits but not for 70S ribosomes. The polypeptide is Ribosome maturation factor RimM (Lactiplantibacillus plantarum (strain ATCC BAA-793 / NCIMB 8826 / WCFS1) (Lactobacillus plantarum)).